The primary structure comprises 301 residues: Probable alpha-L-glutamate ligase 2 (301 aa).

The ATP-grasp domain occupies 104–287; it reads LQLLSRKGIG…VAEPIVEYIE (184 aa). ATP contacts are provided by residues K141, 178 to 179, D187, and 211 to 213; these read EY and RSN. Mg(2+)-binding residues include D248, E260, and N262. Mn(2+)-binding residues include D248, E260, and N262.

The protein belongs to the RimK family. Mg(2+) serves as cofactor. It depends on Mn(2+) as a cofactor.

In Shewanella amazonensis (strain ATCC BAA-1098 / SB2B), this protein is Probable alpha-L-glutamate ligase 2.